Reading from the N-terminus, the 316-residue chain is HPr kinase/phosphorylase (316 aa).

Residues His143 and Lys164 contribute to the active site. Position 158–165 (158–165) interacts with ATP; it reads GEAGSGKS. Ser165 lines the Mg(2+) pocket. Residue Asp182 is the Proton acceptor; for phosphorylation activity. Proton donor; for dephosphorylation activity of the active site. Positions 206 to 215 are important for the catalytic mechanism of both phosphorylation and dephosphorylation; it reads LEVRGLGVLN. Glu207 lines the Mg(2+) pocket. Arg251 is an active-site residue. Residues 272–277 are important for the catalytic mechanism of dephosphorylation; that stretch reads PVMPGR.

It belongs to the HPrK/P family. In terms of assembly, homohexamer. The cofactor is Mg(2+).

It carries out the reaction [HPr protein]-L-serine + ATP = [HPr protein]-O-phospho-L-serine + ADP + H(+). It catalyses the reaction [HPr protein]-O-phospho-L-serine + phosphate + H(+) = [HPr protein]-L-serine + diphosphate. In terms of biological role, catalyzes the ATP- as well as the pyrophosphate-dependent phosphorylation of a specific serine residue in HPr, a phosphocarrier protein of the phosphoenolpyruvate-dependent sugar phosphotransferase system (PTS). HprK/P also catalyzes the pyrophosphate-producing, inorganic phosphate-dependent dephosphorylation (phosphorolysis) of seryl-phosphorylated HPr (P-Ser-HPr). This Xanthomonas oryzae pv. oryzae (strain MAFF 311018) protein is HPr kinase/phosphorylase.